We begin with the raw amino-acid sequence, 130 residues long: MAEFPAELYYSKNHEWMRKESDETFTVGITDHAQEQLGDLVFVELPETNIHVDAGDEVAVVESVKTAADVYSPLSGKVIEINNALENEPATVNRDPYGDGWLYRITIDDEKELNDLLDADGYQTLIEAES.

Residues Thr24–Thr106 form the Lipoyl-binding domain. N6-lipoyllysine is present on Lys65.

The protein belongs to the GcvH family. In terms of assembly, the glycine cleavage system is composed of four proteins: P, T, L and H. Requires (R)-lipoate as cofactor.

In terms of biological role, the glycine cleavage system catalyzes the degradation of glycine. The H protein shuttles the methylamine group of glycine from the P protein to the T protein. The sequence is that of Glycine cleavage system H protein from Coxiella burnetii (strain CbuK_Q154) (Coxiella burnetii (strain Q154)).